The sequence spans 71 residues: DNA-directed RNA polymerase subunit omega (71 aa).

Belongs to the RNA polymerase subunit omega family. As to quaternary structure, the RNAP catalytic core consists of 2 alpha, 1 beta, 1 beta' and 1 omega subunit. When a sigma factor is associated with the core the holoenzyme is formed, which can initiate transcription.

The enzyme catalyses RNA(n) + a ribonucleoside 5'-triphosphate = RNA(n+1) + diphosphate. Its function is as follows. Promotes RNA polymerase assembly. Latches the N- and C-terminal regions of the beta' subunit thereby facilitating its interaction with the beta and alpha subunits. The chain is DNA-directed RNA polymerase subunit omega from Campylobacter curvus (strain 525.92).